A 243-amino-acid polypeptide reads, in one-letter code: Triosephosphate isomerase (243 aa).

9–11 contacts substrate; the sequence is NWK. His96 (electrophile) is an active-site residue. Glu165 acts as the Proton acceptor in catalysis. Substrate is bound by residues Gly171, Ser204, and 225–226; that span reads GG.

This sequence belongs to the triosephosphate isomerase family. As to quaternary structure, homodimer.

The protein localises to the cytoplasm. The enzyme catalyses D-glyceraldehyde 3-phosphate = dihydroxyacetone phosphate. The protein operates within carbohydrate biosynthesis; gluconeogenesis. It participates in carbohydrate degradation; glycolysis; D-glyceraldehyde 3-phosphate from glycerone phosphate: step 1/1. In terms of biological role, involved in the gluconeogenesis. Catalyzes stereospecifically the conversion of dihydroxyacetone phosphate (DHAP) to D-glyceraldehyde-3-phosphate (G3P). The chain is Triosephosphate isomerase from Prochlorococcus marinus (strain MIT 9313).